Consider the following 306-residue polypeptide: Homoserine kinase (306 aa).

Position 90-100 (Pro90–Ser100) interacts with ATP.

This sequence belongs to the GHMP kinase family. Homoserine kinase subfamily.

It localises to the cytoplasm. The enzyme catalyses L-homoserine + ATP = O-phospho-L-homoserine + ADP + H(+). It functions in the pathway amino-acid biosynthesis; L-threonine biosynthesis; L-threonine from L-aspartate: step 4/5. Functionally, catalyzes the ATP-dependent phosphorylation of L-homoserine to L-homoserine phosphate. The chain is Homoserine kinase from Staphylococcus epidermidis (strain ATCC 12228 / FDA PCI 1200).